We begin with the raw amino-acid sequence, 682 residues long: Heat shock 70 kDa protein 10, mitochondrial (682 aa).

Residues 1–50 (MATAALLRSIRRREVVSSPFSAYRCLSSSGKASLNSSYLGQNFRSFSRAF) constitute a mitochondrion transit peptide. Residues 646 to 682 (KIGEHMSGGSGGGSAPGGGSEGGSDQAPEAEYEEVKK) form a disordered region. A compositionally biased stretch (gly residues) spans 651–667 (MSGGSGGGSAPGGGSEG). The segment covering 673 to 682 (PEAEYEEVKK) has biased composition (acidic residues).

The protein belongs to the heat shock protein 70 (TC 1.A.33) family. DnaK subfamily.

It is found in the mitochondrion. Its function is as follows. Chaperone involved in the maturation of iron-sulfur [Fe-S] cluster-containing proteins. Has a low intrinsic ATPase activity which is markedly stimulated by HSCB and ISU1. In cooperation with other chaperones, Hsp70s are key components that facilitate folding of de novo synthesized proteins, assist translocation of precursor proteins into organelles, and are responsible for degradation of damaged protein under stress conditions. The sequence is that of Heat shock 70 kDa protein 10, mitochondrial from Arabidopsis thaliana (Mouse-ear cress).